The primary structure comprises 388 residues: Succinate--CoA ligase [ADP-forming] subunit beta (388 aa).

The ATP-grasp domain occupies 9–244 (KQLFARYGLP…PSQEDSREAH (236 aa)). Residues Lys-46, 53 to 55 (GRG), Glu-99, Thr-102, and Glu-107 contribute to the ATP site. Mg(2+)-binding residues include Asn-199 and Asp-213. Substrate is bound by residues Asn-264 and 321–323 (GIV).

Belongs to the succinate/malate CoA ligase beta subunit family. Heterotetramer of two alpha and two beta subunits. Mg(2+) is required as a cofactor.

It carries out the reaction succinate + ATP + CoA = succinyl-CoA + ADP + phosphate. It catalyses the reaction GTP + succinate + CoA = succinyl-CoA + GDP + phosphate. Its pathway is carbohydrate metabolism; tricarboxylic acid cycle; succinate from succinyl-CoA (ligase route): step 1/1. In terms of biological role, succinyl-CoA synthetase functions in the citric acid cycle (TCA), coupling the hydrolysis of succinyl-CoA to the synthesis of either ATP or GTP and thus represents the only step of substrate-level phosphorylation in the TCA. The beta subunit provides nucleotide specificity of the enzyme and binds the substrate succinate, while the binding sites for coenzyme A and phosphate are found in the alpha subunit. This chain is Succinate--CoA ligase [ADP-forming] subunit beta, found in Pectobacterium atrosepticum (strain SCRI 1043 / ATCC BAA-672) (Erwinia carotovora subsp. atroseptica).